The primary structure comprises 463 residues: Oxidoreductase OXR1 (463 aa).

6-hydroxy-FAD contacts are provided by residues 59–63 (GGSYS), Val-154, and Asp-366.

The protein belongs to the FAD-dependent oxidoreductase family. 6-hydroxy-FAD serves as cofactor.

Its pathway is siderophore biosynthesis. Its function is as follows. Oxidoreductase; part of the gene cluster that mediates the biosynthesis of hydroxamate-containing siderophores that play a critical role in virulence via intracellular iron acquisition during macrophage infection. This is Oxidoreductase OXR1 from Ajellomyces capsulatus (Darling's disease fungus).